The following is a 295-amino-acid chain: Pyridoxal 5'-phosphate synthase subunit PdxS (295 aa).

Position 25 (Asp-25) interacts with D-ribose 5-phosphate. Lys-82 serves as the catalytic Schiff-base intermediate with D-ribose 5-phosphate. Position 154 (Gly-154) interacts with D-ribose 5-phosphate. Arg-166 contacts D-glyceraldehyde 3-phosphate. D-ribose 5-phosphate is bound by residues Gly-215 and 236–237 (GS).

Belongs to the PdxS/SNZ family. In the presence of PdxT, forms a dodecamer of heterodimers.

The catalysed reaction is aldehydo-D-ribose 5-phosphate + D-glyceraldehyde 3-phosphate + L-glutamine = pyridoxal 5'-phosphate + L-glutamate + phosphate + 3 H2O + H(+). The protein operates within cofactor biosynthesis; pyridoxal 5'-phosphate biosynthesis. Its function is as follows. Catalyzes the formation of pyridoxal 5'-phosphate from ribose 5-phosphate (RBP), glyceraldehyde 3-phosphate (G3P) and ammonia. The ammonia is provided by the PdxT subunit. Can also use ribulose 5-phosphate and dihydroxyacetone phosphate as substrates, resulting from enzyme-catalyzed isomerization of RBP and G3P, respectively. In Bacillus anthracis (strain A0248), this protein is Pyridoxal 5'-phosphate synthase subunit PdxS.